A 508-amino-acid chain; its full sequence is GMP synthase [glutamine-hydrolyzing] (508 aa).

The 189-residue stretch at 1–189 folds into the Glutamine amidotransferase type-1 domain; sequence MILVLDFGSQ…ALLVCGCEKT (189 aa). The Nucleophile role is filled by C78. Residues H163 and E165 contribute to the active site. In terms of domain architecture, GMPS ATP-PPase spans 190–383; that stretch reads WGMQHFAQRE…LGVSQDFLMH (194 aa). 217–223 serves as a coordination point for ATP; the sequence is SGGVDST.

In terms of assembly, homodimer.

The enzyme catalyses XMP + L-glutamine + ATP + H2O = GMP + L-glutamate + AMP + diphosphate + 2 H(+). It participates in purine metabolism; GMP biosynthesis; GMP from XMP (L-Gln route): step 1/1. In terms of biological role, catalyzes the synthesis of GMP from XMP. The protein is GMP synthase [glutamine-hydrolyzing] of Helicobacter pylori (strain G27).